An 89-amino-acid polypeptide reads, in one-letter code: Helix-loop-helix protein 15 (89 aa).

A disordered region spans residues 1–32 (MLMEDGGLDTTSEEYRKLSKAERRKRRRATPK). Residues 22–32 (ERRKRRRATPK) show a composition bias toward basic residues. Residues 32–45 (KYRNLHATRERIRV) form a basic motif region. The bHLH domain occupies 32-84 (KYRNLHATRERIRVESFNMAFSQLRALLPTLPVEKKLSKIEILRFSIAYISFL). Residues 46-84 (ESFNMAFSQLRALLPTLPVEKKLSKIEILRFSIAYISFL) form a helix-loop-helix motif region.

Expressed in sensory head neurons of the lateral ganglion.

The protein resides in the nucleus. Its function is as follows. Transcription factor which binds the E box motif 5'-CA[TC][AG]TG-3'. Involved in modulating physiological aging, probably by regulating expression of branched-chain amino acid transferase-1, bcat-1. In Caenorhabditis elegans, this protein is Helix-loop-helix protein 15.